We begin with the raw amino-acid sequence, 468 residues long: UDP-N-acetylmuramate--L-alanine ligase (468 aa).

107–113 (GTHGKTT) is an ATP binding site.

It belongs to the MurCDEF family.

It localises to the cytoplasm. It carries out the reaction UDP-N-acetyl-alpha-D-muramate + L-alanine + ATP = UDP-N-acetyl-alpha-D-muramoyl-L-alanine + ADP + phosphate + H(+). It functions in the pathway cell wall biogenesis; peptidoglycan biosynthesis. In terms of biological role, cell wall formation. This is UDP-N-acetylmuramate--L-alanine ligase from Roseiflexus sp. (strain RS-1).